The following is a 311-amino-acid chain: Olfactory receptor 6C3 (311 aa).

The Extracellular segment spans residues 1 to 22 (MNHTMVTEFVLLGLSDDPDLQI). Asn2 is a glycosylation site (N-linked (GlcNAc...) asparagine). A helical transmembrane segment spans residues 23–43 (VIFLFLFITYILSVTGNLTII). At 44–51 (TLTFVDSH) the chain is on the cytoplasmic side. The helical transmembrane segment at 52 to 72 (LQTPMYFFLRNFSFLEISFTT) threads the bilayer. Over 73 to 96 (VCIPRFLGAIITRNKTISYNNCAA) the chain is Extracellular. Cys94 and Cys186 are disulfide-bonded. The helical transmembrane segment at 97–117 (QLFFFIFMGVTEFYILTAMSY) threads the bilayer. Residues 118-136 (DRYVAICKPLHYTSIMNRK) are Cytoplasmic-facing. A helical transmembrane segment spans residues 137–157 (LCTLLVLCAWLSGFLTIFPPL). Residues 158 to 194 (MLLLQLDYCASNVIDHFACDYFPLLQLSCSDTWLLEV) lie on the Extracellular side of the membrane. The chain crosses the membrane as a helical span at residues 195 to 214 (IGFYFALVTLLFTLALVILS). The Cytoplasmic portion of the chain corresponds to 215 to 234 (YMYIIRTILRIPSASQRKKA). A helical membrane pass occupies residues 235 to 255 (FSTCSSHMIVISISYGSCIFM). Over 256–268 (YANPSAKEKASLT) the chain is Extracellular. The chain crosses the membrane as a helical span at residues 269–289 (KGIAILNTSVAPMLNPFIYTL). Residues 290–311 (RNQQVKQAFKNVVHKVVFYANQ) are Cytoplasmic-facing.

It belongs to the G-protein coupled receptor 1 family.

Its subcellular location is the cell membrane. In terms of biological role, odorant receptor. This chain is Olfactory receptor 6C3 (OR6C3), found in Homo sapiens (Human).